A 156-amino-acid chain; its full sequence is S-ribosylhomocysteine lyase (156 aa).

Histidine 54, histidine 58, and cysteine 126 together coordinate Fe cation.

This sequence belongs to the LuxS family. In terms of assembly, homodimer. Requires Fe cation as cofactor.

The catalysed reaction is S-(5-deoxy-D-ribos-5-yl)-L-homocysteine = (S)-4,5-dihydroxypentane-2,3-dione + L-homocysteine. In terms of biological role, involved in the synthesis of autoinducer 2 (AI-2) which is secreted by bacteria and is used to communicate both the cell density and the metabolic potential of the environment. The regulation of gene expression in response to changes in cell density is called quorum sensing. Catalyzes the transformation of S-ribosylhomocysteine (RHC) to homocysteine (HC) and 4,5-dihydroxy-2,3-pentadione (DPD). The sequence is that of S-ribosylhomocysteine lyase from Shouchella clausii (strain KSM-K16) (Alkalihalobacillus clausii).